A 764-amino-acid polypeptide reads, in one-letter code: Subtilisin-like protease SBT1.6 (764 aa).

A signal peptide spans 1-20; sequence MASSTIVLLLFLSFPFISFA. An Inhibitor I9 domain is found at 46–99; the sequence is HWYSTEFAEESRIVHVYHTVFHGFSAVVTPDEADNLRNHPAVLAVFEDRRRELH. The region spanning 103–606 is the Peptidase S8 domain; that stretch reads SPQFLGLQNQ…SGHLNLGRAM (504 aa). Residue Asp-131 is the Charge relay system of the active site. Asn-191 carries an N-linked (GlcNAc...) asparagine glycan. His-205 functions as the Charge relay system in the catalytic mechanism. Residues 377-457 form the PA domain; the sequence is SSASLCMENT…NEGDRIKAYA (81 aa). The active-site Charge relay system is Ser-538. Asn-578 carries an N-linked (GlcNAc...) asparagine glycan.

The protein belongs to the peptidase S8 family. Expressed in roots, leaves and flowers of mature plants.

The chain is Subtilisin-like protease SBT1.6 from Arabidopsis thaliana (Mouse-ear cress).